Here is a 482-residue protein sequence, read N- to C-terminus: G patch domain-containing protein 2-like (482 aa).

A phosphoserine mark is found at Ser31, Ser86, and Ser88. Thr91 bears the Phosphothreonine mark. Disordered regions lie at residues 195–222 (SQPGRKERMECEAEEQKHGSDENMSECD) and 408–482 (KRKR…TNGC). Residues 198-215 (GRKERMECEAEEQKHGSD) show a composition bias toward basic and acidic residues. Residues 414–427 (VASASFSSPSPVHP) show a composition bias toward low complexity. Positions 468 to 482 (EKNSGCSSSPGTNGC) are enriched in polar residues.

This Mus musculus (Mouse) protein is G patch domain-containing protein 2-like (Gpatch2l).